The chain runs to 350 residues: Methylthioribose-1-phosphate isomerase (350 aa).

Residues 47–49, arginine 89, and glutamine 196 contribute to the substrate site; that span reads RGA. Aspartate 237 (proton donor) is an active-site residue. Substrate is bound at residue 247-248; it reads NK.

It belongs to the eIF-2B alpha/beta/delta subunits family. MtnA subfamily.

The catalysed reaction is 5-(methylsulfanyl)-alpha-D-ribose 1-phosphate = 5-(methylsulfanyl)-D-ribulose 1-phosphate. The protein operates within amino-acid biosynthesis; L-methionine biosynthesis via salvage pathway; L-methionine from S-methyl-5-thio-alpha-D-ribose 1-phosphate: step 1/6. Catalyzes the interconversion of methylthioribose-1-phosphate (MTR-1-P) into methylthioribulose-1-phosphate (MTRu-1-P). The polypeptide is Methylthioribose-1-phosphate isomerase (Nitratidesulfovibrio vulgaris (strain DSM 19637 / Miyazaki F) (Desulfovibrio vulgaris)).